The primary structure comprises 318 residues: DNA repair nuclease/redox regulator APEX1 (318 aa).

Positions 1–33 are necessary for interaction with YBX1, binding to RNA, association together with NPM1 to rRNA, endoribonuclease activity on abasic RNA and localization in the nucleoli; the sequence is MPKRGKKGAVAEDGDELKTEPEAKKSKTTAKKN. The interval 1–60 is disordered; sequence MPKRGKKGAVAEDGDELKTEPEAKKSKTTAKKNDKEAAGEGPALYEDPPDQKTSPSGKPA. An N6-acetyllysine; by EP300 mark is found at Lys-6 and Lys-7. A Nuclear localization signal (NLS) motif is present at residues 8 to 13; that stretch reads GAVAED. Residues 16 to 38 are compositionally biased toward basic and acidic residues; it reads ELKTEPEAKKSKTTAKKNDKEAA. A necessary for interaction with NPM1 and for efficient rRNA binding region spans residues 23–33; the sequence is AKKSKTTAKKN. Residues Lys-27, Lys-31, Lys-32, and Lys-35 each carry the N6-acetyllysine modification. Residue Ser-54 is modified to Phosphoserine. Positions 64–80 match the Nuclear export signal (NES) motif; the sequence is ICSWNVDGLRAWIKKKG. Cys-65 is subject to S-nitrosocysteine; alternate. A disulfide bridge links Cys-65 with Cys-93. Asp-70 contributes to the Mg(2+) binding site. Residue Cys-93 is modified to S-nitrosocysteine; alternate. Glu-96 contributes to the Mg(2+) binding site. Residue Tyr-171 is part of the active site. The residue at position 197 (Lys-197) is an N6-acetyllysine. 2 residues coordinate Mg(2+): Asp-210 and Asn-212. Asp-210 functions as the Proton donor/acceptor in the catalytic mechanism. Thr-233 carries the post-translational modification Phosphothreonine; by CDK5. Residues 289–318 form a mitochondrial targeting sequence (MTS) region; it reads HSLLTALCDSKIRSKALGSDHCPITLYLAL. Residue Asp-308 coordinates Mg(2+). Residue Cys-310 is modified to S-nitrosocysteine.

This sequence belongs to the DNA repair enzymes AP/ExoA family. In terms of assembly, monomer. Homodimer; disulfide-linked. Component of the SET complex, composed of at least APEX1, SET, ANP32A, HMGB2, NME1 and TREX1. Associates with the dimer XRCC5/XRCC6 in a DNA-dependent manner. Interacts with SIRT1; the interaction is increased in the context of genotoxic stress. Interacts with HDAC1, HDAC2 and HDAC3; the interactions are not dependent on the APEX1 acetylation status. Interacts with XRCC1; the interaction is induced by SIRT1 and increased with the APEX1 acetylated form. Interacts with NPM1 (via N-terminal domain); the interaction is RNA-dependent and decreases in hydrogen peroxide-damaged cells. Interacts (via N-terminus) with YBX1 (via C-terminus); the interaction is increased in presence of APEX1 acetylated at Lys-6 and Lys-7. Interacts with HNRNPL; the interaction is DNA-dependent. Interacts (via N-terminus) with KPNA1 and KPNA2. Interacts with TXN; the interaction stimulates the FOS/JUN AP-1 complex DNA-binding activity in a redox-dependent manner. Interacts with GZMA, KRT8, MDM2, POLB, PRDX6, PRPF19, RPLP0, TOMM20 and WDR77. Binds to CDK5. Requires Mg(2+) as cofactor. Mn(2+) serves as cofactor. Phosphorylated. Phosphorylation by kinase PKC or casein kinase CK2 results in enhanced redox activity that stimulates binding of the FOS/JUN AP-1 complex to its cognate binding site. AP-endodeoxyribonuclease activity is not affected by CK2-mediated phosphorylation. Phosphorylation of Thr-233 by CDK5 in response to MPP(+)/MPTP (1-methyl-4-phenylpyridinium) reduces AP-endodeoxyribonuclease activity resulting in accumulation of DNA damage and contributing to neuronal death. In terms of processing, acetylated on Lys-6 and Lys-7. Acetylation is increased by the transcriptional coactivator EP300 acetyltransferase, genotoxic agents like H(2)O(2) and methyl methanesulfonate (MMS). Acetylation increases its binding affinity to the negative calcium response element (nCaRE) DNA promoter. The acetylated form induces a stronger binding of YBX1 to the Y-box sequence in the MDR1 promoter than the unacetylated form. Deacetylated on lysines. Lys-6 and Lys-7 are deacetylated by SIRT1. Post-translationally, cleaved at Lys-31 by granzyme A to create the mitochondrial form; leading in reduction of binding to DNA, AP endodeoxyribonuclease activity, redox activation of transcription factors and to enhanced cell death. Cleaved by granzyme K; leading to intracellular ROS accumulation and enhanced cell death after oxidative stress. Cys-69 and Cys-93 are nitrosylated in response to nitric oxide (NO) and lead to the exposure of the nuclear export signal (NES). In terms of processing, ubiquitinated by MDM2; leading to translocation to the cytoplasm and proteasomal degradation.

It is found in the nucleus. The protein resides in the nucleolus. The protein localises to the nucleus speckle. Its subcellular location is the endoplasmic reticulum. It localises to the cytoplasm. It is found in the mitochondrion. The enzyme catalyses a deoxyribonucleotide-2'-deoxyribose-5'-monophosphate-DNA + H2O = a 5'-end 2'-deoxyribose-5'-monophosphate-DNA + a 3'-end 2'-deoxyribonucleotide-DNA + H(+). It catalyses the reaction Exonucleolytic cleavage in the 3'- to 5'-direction to yield nucleoside 5'-phosphates.. It carries out the reaction a 3'-end 2'-deoxyribonucleotide-3'-phosphoglycolate-DNA + H2O = 2-phosphoglycolate + a 3'-end 2'-deoxyribonucleotide-DNA + H(+). The catalysed reaction is a 3'-end 2'-deoxyribonucleotide-8-oxoguanine-DNA + H2O = 8-oxo-dGMP + a 3'-end 2'-deoxyribonucleotide-DNA + H(+). With respect to regulation, NPM1 stimulates endodeoxyribonuclease activity on double-stranded DNA with AP sites, but inhibits endoribonuclease activity on single-stranded RNA containing AP sites. Functionally, multifunctional protein that plays a central role in the cellular response to oxidative stress. The two major activities of APEX1 are DNA repair and redox regulation of transcriptional factors. Functions as an apurinic/apyrimidinic (AP) endodeoxyribonuclease in the base excision repair (BER) pathway of DNA lesions induced by oxidative and alkylating agents. Initiates repair of AP sites in DNA by catalyzing hydrolytic incision of the phosphodiester backbone immediately adjacent to the damage, generating a single-strand break with 5'-deoxyribose phosphate and 3'-hydroxyl ends. Also incises at AP sites in the DNA strand of DNA/RNA hybrids, single-stranded DNA regions of R-loop structures, and single-stranded RNA molecules. Operates at switch sites of immunoglobulin (Ig) constant regions where it mediates Ig isotype class switch recombination. Processes AP sites induced by successive action of AICDA and UNG. Generates staggered nicks in opposite DNA strands resulting in the formation of double-strand DNA breaks that are finally resolved via non-homologous end joining repair pathway. Has 3'-5' exodeoxyribonuclease activity on mismatched deoxyribonucleotides at the 3' termini of nicked or gapped DNA molecules during short-patch BER. Possesses DNA 3' phosphodiesterase activity capable of removing lesions (such as phosphoglycolate and 8-oxoguanine) blocking the 3' side of DNA strand breaks. Also acts as an endoribonuclease involved in the control of single-stranded RNA metabolism. Plays a role in regulating MYC mRNA turnover by preferentially cleaving in between UA and CA dinucleotides of the MYC coding region determinant (CRD). In association with NMD1, plays a role in the rRNA quality control process during cell cycle progression. Acts as a loading factor for POLB onto non-incised AP sites in DNA and stimulates the 5'-terminal deoxyribose 5'-phosphate (dRp) excision activity of POLB. Exerts reversible nuclear redox activity to regulate DNA binding affinity and transcriptional activity of transcriptional factors by controlling the redox status of their DNA-binding domain, such as the FOS/JUN AP-1 complex after exposure to IR. Involved in calcium-dependent down-regulation of parathyroid hormone (PTH) expression by binding to negative calcium response elements (nCaREs). Together with HNRNPL or the dimer XRCC5/XRCC6, associates with nCaRE, acting as an activator of transcriptional repression. May also play a role in the epigenetic regulation of gene expression by participating in DNA demethylation. Stimulates the YBX1-mediated MDR1 promoter activity, when acetylated at Lys-6 and Lys-7, leading to drug resistance. Plays a role in protection from granzyme-mediated cellular repair leading to cell death. Binds DNA and RNA. Associates, together with YBX1, on the MDR1 promoter. Together with NPM1, associates with rRNA. This Pongo pygmaeus (Bornean orangutan) protein is DNA repair nuclease/redox regulator APEX1 (APEX1).